The following is a 388-amino-acid chain: Phosphopentomutase (388 aa).

Mn(2+)-binding residues include Asp10, Asp282, His287, Asp323, His324, and His335.

This sequence belongs to the phosphopentomutase family. Mn(2+) is required as a cofactor.

It localises to the cytoplasm. The enzyme catalyses 2-deoxy-alpha-D-ribose 1-phosphate = 2-deoxy-D-ribose 5-phosphate. It carries out the reaction alpha-D-ribose 1-phosphate = D-ribose 5-phosphate. The protein operates within carbohydrate degradation; 2-deoxy-D-ribose 1-phosphate degradation; D-glyceraldehyde 3-phosphate and acetaldehyde from 2-deoxy-alpha-D-ribose 1-phosphate: step 1/2. Its function is as follows. Isomerase that catalyzes the conversion of deoxy-ribose 1-phosphate (dRib-1-P) and ribose 1-phosphate (Rib-1-P) to deoxy-ribose 5-phosphate (dRib-5-P) and ribose 5-phosphate (Rib-5-P), respectively. The chain is Phosphopentomutase from Acetivibrio thermocellus (strain ATCC 27405 / DSM 1237 / JCM 9322 / NBRC 103400 / NCIMB 10682 / NRRL B-4536 / VPI 7372) (Clostridium thermocellum).